The chain runs to 314 residues: Basic leucine zipper 63 (314 aa).

A Phosphoserine; by KIN10 modification is found at S29. Residues 94–177 (KPQDTSGRSD…SRRRKQAHLS (84 aa)) form a disordered region. A compositionally biased stretch (polar residues) spans 96–133 (QDTSGRSDNGGANESEQASLASSKATPMMSSAITSGSE). A bZIP domain is found at 151-214 (NVKRVKRMLS…NDASVENRVL (64 aa)). A basic motif region spans residues 153–172 (KRVKRMLSNRESARRSRRRK). Positions 155-162 (VKRMLSNR) match the Nuclear localization signal 1 motif. The interval 179 to 193 (LETQVSQLRVENSKL) is leucine-zipper. Residues 253–274 (SLPSETSNSPDTTSSQVTTPEI) are disordered. A phosphoserine; by KIN10 mark is found at S294 and S300. The Nuclear localization signal 2 signature appears at 295 to 302 (MRRVESLE).

It belongs to the bZIP family. In terms of assembly, homodimer. Forms a heterodimer with LSD1, BZIP1, BZIP2, BZIP9, BZIP10, BZIP11, BZIP25, BZIP44 and BZIP53. Interacts with KIN10 and SNF4. Component of a ternary complex composed of BZIP2-BZIP63 heterodimer and KIN10. In terms of processing, phosphorylated. The phosphorylation at Ser-29, Ser-294 and Ser-300 by KIN10 strongly enhances its ability to form homo- as well as heterodimers and are then essential for its transcriptional activity. As to expression, expressed in roots, shoots, young leaves, pollen, and flowers.

It is found in the nucleus. Its activity is regulated as follows. Up-regulated by KIN10 under a phosphorylation-dependent manner. In terms of biological role, transcription factor involved in controlling responses to starvation. BZIP2-BZIP63-KIN10 complex binds to the ETFQO promoter to up-regulate its transcription. The chain is Basic leucine zipper 63 (BZIP63) from Arabidopsis thaliana (Mouse-ear cress).